Reading from the N-terminus, the 897-residue chain is Probable bifunctional chitinase/lysozyme (897 aa).

The signal sequence occupies residues 1-24; that stretch reads MKLNIFTKSMIGMGLVCSALPALA. The Chitin-binding type-3 1 domain maps to 25–91; sequence MEAWNNQQGG…SQFGNTLSCE (67 aa). Disordered regions lie at residues 90–127, 182–222, and 287–333; these read CEKS…SNSS, TEIS…PADK, and QYGN…DSVN. Residues 95 to 111 show a composition bias toward low complexity; it reads SSSSSNSNTPASNTPAN. Polar residues-rich tracts occupy residues 113-127 and 182-197; these read GSAT…SNSS and TEIS…TSAP. The region spanning 128–194 is the Chitin-binding type-3 2 domain; that stretch reads VVAWNKQQGG…SETSNPQSCT (67 aa). Positions 198–216 are enriched in pro residues; it reads QPSPDVKPAPDVKPAPDVQ. The 67-residue stretch at 229–295 folds into the Chitin-binding type-3 3 domain; sequence VVAWKGQEGS…SQYGNPGSCS (67 aa). Residues 309–318 show a composition bias toward pro residues; that stretch reads DPTPETPVTP. Polar residues predominate over residues 322-333; sequence NSEPSTPADSVN. Chitin-binding type-3 domains follow at residues 337–403 and 459–529; these read LQAW…TTCE and AKAW…PQFN. Residues 586-877 enclose the GH18 domain; it reads KHVYAPYVDF…TNLSPEFHGL (292 aa). The cysteines at positions 628 and 673 are disulfide-linked. The active-site Proton donor is the Glu700.

Belongs to the glycosyl hydrolase 18 family. Chitinase class II subfamily.

Its subcellular location is the periplasm. It carries out the reaction Random endo-hydrolysis of N-acetyl-beta-D-glucosaminide (1-&gt;4)-beta-linkages in chitin and chitodextrins.. The catalysed reaction is Hydrolysis of (1-&gt;4)-beta-linkages between N-acetylmuramic acid and N-acetyl-D-glucosamine residues in a peptidoglycan and between N-acetyl-D-glucosamine residues in chitodextrins.. Functionally, bifunctional enzyme with lysozyme/chitinase activity. This Escherichia coli (strain K12) protein is Probable bifunctional chitinase/lysozyme (chiA).